The primary structure comprises 93 residues: Acylphosphatase (93 aa).

The Acylphosphatase-like domain maps to 6–92 (RAHVWVGGKV…EGLTHFEVLR (87 aa)). Residues Arg-21 and Asn-39 contribute to the active site.

The protein belongs to the acylphosphatase family.

It catalyses the reaction an acyl phosphate + H2O = a carboxylate + phosphate + H(+). This Gloeobacter violaceus (strain ATCC 29082 / PCC 7421) protein is Acylphosphatase (acyP).